The following is a 185-amino-acid chain: Crossover junction endodeoxyribonuclease RuvC (185 aa).

Catalysis depends on residues aspartate 7, glutamate 68, and aspartate 141. 3 residues coordinate Mg(2+): aspartate 7, glutamate 68, and aspartate 141.

This sequence belongs to the RuvC family. In terms of assembly, homodimer which binds Holliday junction (HJ) DNA. The HJ becomes 2-fold symmetrical on binding to RuvC with unstacked arms; it has a different conformation from HJ DNA in complex with RuvA. In the full resolvosome a probable DNA-RuvA(4)-RuvB(12)-RuvC(2) complex forms which resolves the HJ. Mg(2+) serves as cofactor.

The protein localises to the cytoplasm. It carries out the reaction Endonucleolytic cleavage at a junction such as a reciprocal single-stranded crossover between two homologous DNA duplexes (Holliday junction).. Functionally, the RuvA-RuvB-RuvC complex processes Holliday junction (HJ) DNA during genetic recombination and DNA repair. Endonuclease that resolves HJ intermediates. Cleaves cruciform DNA by making single-stranded nicks across the HJ at symmetrical positions within the homologous arms, yielding a 5'-phosphate and a 3'-hydroxyl group; requires a central core of homology in the junction. The consensus cleavage sequence is 5'-(A/T)TT(C/G)-3'. Cleavage occurs on the 3'-side of the TT dinucleotide at the point of strand exchange. HJ branch migration catalyzed by RuvA-RuvB allows RuvC to scan DNA until it finds its consensus sequence, where it cleaves and resolves the cruciform DNA. The polypeptide is Crossover junction endodeoxyribonuclease RuvC (Helicobacter hepaticus (strain ATCC 51449 / 3B1)).